A 166-amino-acid polypeptide reads, in one-letter code: Large ribosomal subunit protein uL10 (166 aa).

Belongs to the universal ribosomal protein uL10 family. As to quaternary structure, part of the ribosomal stalk of the 50S ribosomal subunit. The N-terminus interacts with L11 and the large rRNA to form the base of the stalk. The C-terminus forms an elongated spine to which L12 dimers bind in a sequential fashion forming a multimeric L10(L12)X complex.

In terms of biological role, forms part of the ribosomal stalk, playing a central role in the interaction of the ribosome with GTP-bound translation factors. In Lactobacillus johnsonii (strain CNCM I-12250 / La1 / NCC 533), this protein is Large ribosomal subunit protein uL10.